The chain runs to 435 residues: Dual specificity protein kinase FUZ7 (435 aa).

Positions 1–61 (MLSSGAGSSI…TIGKSSAVTP (61 aa)) are disordered. The segment covering 46–59 (AASNASTIGKSSAV) has biased composition (polar residues). One can recognise a Protein kinase domain in the interval 109–417 (LKTLSELGAG…PKDLTKHQYV (309 aa)). Residues 115–123 (LGAGNGGTV) and Lys138 each bind ATP. Asp231 (proton acceptor) is an active-site residue. Residues 307 to 359 (NEEDDDSDADNNYTNEDLAGTLSPTKPAPMISLGQNEKQRRRKSKPAGVSLEG) form a disordered region.

The protein belongs to the protein kinase superfamily. STE Ser/Thr protein kinase family. MAP kinase kinase subfamily.

It catalyses the reaction L-seryl-[protein] + ATP = O-phospho-L-seryl-[protein] + ADP + H(+). The catalysed reaction is L-threonyl-[protein] + ATP = O-phospho-L-threonyl-[protein] + ADP + H(+). It carries out the reaction L-tyrosyl-[protein] + ATP = O-phospho-L-tyrosyl-[protein] + ADP + H(+). Functionally, protein kinase that is necessary for a-locus-dependent processes, such as conjugation tube formation, filament formation, and maintenance of filamentous growth, and for a-locus-independent processes, such as tumor induction and teliospore germination. This chain is Dual specificity protein kinase FUZ7 (FUZ7), found in Mycosarcoma maydis (Corn smut fungus).